Here is a 76-residue protein sequence, read N- to C-terminus: Adropin (76 aa).

The first 33 residues, 1–33 (MGAAISQGALIAIVCNGLVGFLLLLLWVILCWA), serve as a signal peptide directing secretion. The disordered stretch occupies residues 41–76 (VDSLSESSPNSSPGPCPEKAPPPQKPSHEGSYLLQP). Pro residues predominate over residues 52–65 (SPGPCPEKAPPPQK).

Expressed in liver and brain.

Its subcellular location is the secreted. Involved in the regulation of glucose homeostasis and lipid metabolism. The chain is Adropin (ENHO) from Homo sapiens (Human).